Consider the following 848-residue polypeptide: Leucine--tRNA ligase (848 aa).

The disordered stretch occupies residues 1–21 (MTENTPGTSAPERFDPATADT). A 'HIGH' region motif is present at residues 51–61 (PYPSGRIHIGH). Positions 625–629 (KMSKS) match the 'KMSKS' region motif. K628 provides a ligand contact to ATP.

Belongs to the class-I aminoacyl-tRNA synthetase family.

It is found in the cytoplasm. It catalyses the reaction tRNA(Leu) + L-leucine + ATP = L-leucyl-tRNA(Leu) + AMP + diphosphate. The protein is Leucine--tRNA ligase of Novosphingobium aromaticivorans (strain ATCC 700278 / DSM 12444 / CCUG 56034 / CIP 105152 / NBRC 16084 / F199).